The chain runs to 224 residues: Phosphoribosylformylglycinamidine synthase subunit PurQ (224 aa).

Residues phenylalanine 3 to alanine 224 enclose the Glutamine amidotransferase type-1 domain. Cysteine 86 acts as the Nucleophile in catalysis. Catalysis depends on residues histidine 195 and glutamate 197.

Part of the FGAM synthase complex composed of 1 PurL, 1 PurQ and 2 PurS subunits.

It is found in the cytoplasm. The catalysed reaction is N(2)-formyl-N(1)-(5-phospho-beta-D-ribosyl)glycinamide + L-glutamine + ATP + H2O = 2-formamido-N(1)-(5-O-phospho-beta-D-ribosyl)acetamidine + L-glutamate + ADP + phosphate + H(+). It carries out the reaction L-glutamine + H2O = L-glutamate + NH4(+). The protein operates within purine metabolism; IMP biosynthesis via de novo pathway; 5-amino-1-(5-phospho-D-ribosyl)imidazole from N(2)-formyl-N(1)-(5-phospho-D-ribosyl)glycinamide: step 1/2. Its function is as follows. Part of the phosphoribosylformylglycinamidine synthase complex involved in the purines biosynthetic pathway. Catalyzes the ATP-dependent conversion of formylglycinamide ribonucleotide (FGAR) and glutamine to yield formylglycinamidine ribonucleotide (FGAM) and glutamate. The FGAM synthase complex is composed of three subunits. PurQ produces an ammonia molecule by converting glutamine to glutamate. PurL transfers the ammonia molecule to FGAR to form FGAM in an ATP-dependent manner. PurS interacts with PurQ and PurL and is thought to assist in the transfer of the ammonia molecule from PurQ to PurL. The sequence is that of Phosphoribosylformylglycinamidine synthase subunit PurQ from Trichormus variabilis (strain ATCC 29413 / PCC 7937) (Anabaena variabilis).